The chain runs to 30 residues: LSSGATALSGVPRLTKPAGRLTTTTVAVAF.

Expressed by the venom gland.

It is found in the secreted. This is Conopeptide Vi002 from Conus virgo (Virgin cone).